We begin with the raw amino-acid sequence, 229 residues long: Prolactin (229 aa).

Positions 1-30 (MDNKGWSLKGSLLFLLLLLSDLLLCKSVAS) are cleaved as a signal peptide. Cys34 and Cys41 are oxidised to a cystine. Ser56 is subject to Phosphoserine. Asn61 carries N-linked (GlcNAc...) asparagine glycosylation. A phosphoserine mark is found at Ser64 and Ser120. Cystine bridges form between Cys88–Cys204 and Cys221–Cys229.

The protein belongs to the somatotropin/prolactin family. In terms of assembly, interacts with PRLR.

The protein resides in the secreted. Its function is as follows. Prolactin acts primarily on the mammary gland by promoting lactation. The protein is Prolactin (PRL) of Felis catus (Cat).